Consider the following 777-residue polypeptide: Proton-coupled zinc antiporter SLC30A5 (777 aa).

Topologically, residues 1 to 28 (MEEKYSSNVMSSGRLGPVDAPESRLTRY) are cytoplasmic. A helical membrane pass occupies residues 29-49 (IVLLCFTKFLKALGIFESYDL). Residues 50 to 52 (LKV) are Lumenal-facing. Residues 53 to 73 (VHIVQFIFILKLGSTCFMVLF) form a helical membrane-spanning segment. Over 74–94 (QKPFSSGKSITKRQWVSIVKH) the chain is Cytoplasmic. Residues 95-115 (AFVSCIISLLWFFGLTLCGPL) form a helical membrane-spanning segment. The Lumenal segment spans residues 116–117 (RT). The chain crosses the membrane as a helical span at residues 118–138 (LLLFEHSDIVVISLLTVLFTG). Residues 139-148 (SGGGPSKTRG) are Cytoplasmic-facing. A helical transmembrane segment spans residues 149–169 (AAFFIIAVICLLLFDNDDLMA). Topologically, residues 170–189 (KIAEHPEGHHDSALTHFLYR) are lumenal. A helical transmembrane segment spans residues 190–210 (AFFLLGVADHKGGVLLLVLAL). The Cytoplasmic segment spans residues 211-234 (CFNVGFHTASRKLSLDIGGAKRLQ). Residues 235-255 (ALSHLVSVIILSPWVIILSAT) form a helical membrane-spanning segment. The Lumenal segment spans residues 256 to 263 (TESKIESW). A helical transmembrane segment spans residues 264-284 (SALIMPFMTVIFSVMIMDFYV). Topologically, residues 285–299 (ESVCSVKMEPSKCAR) are cytoplasmic. A helical membrane pass occupies residues 300–320 (YGSFLIFASALLLGNFWTHPI). At 321-338 (TDQLRAMNKPAHQLHTEH) the chain is on the lumenal side. A helical membrane pass occupies residues 339-359 (VLSGGVVVSAIFFILSAQILA). At 360-414 (SSSRKGQRGTLVGYSPEGTPLYNFMGDALHNTSPSMPRFLKDSLKQILEEYDSRQ) the chain is on the cytoplasmic side. Residues 415–435 (IFYFLCLNLAFTFVEIFYGVW) traverse the membrane as a helical segment. Residues 436–444 (TNSLGLLSD) are Lumenal-facing. A helical membrane pass occupies residues 445–465 (GFHMLFDCSALVMGLIAALMT). The Zn(2+) site is built by histidine 447 and aspartate 451. At 466 to 484 (RWKATRIFSYGYGRVEILS) the chain is on the cytoplasmic side. A helical transmembrane segment spans residues 485–505 (GFINGLFLVVIAFFVFIEAVA). Residues 506–516 (RIYDPPDINTD) are Lumenal-facing. The helical transmembrane segment at 517 to 537 (MLTPVSVGGLIVNLVGICAFS) threads the bilayer. Residues 538–586 (HAHSHGAARGGCPSHDHGHSHHGHGHSHGHNHGHSHSDHGHNHGHTHNH) are his-rich loop; required for zinc transport. At 538 to 604 (HAHSHGAARG…VGMNANMRGV (67 aa)) the chain is on the cytoplasmic side. The tract at residues 547–593 (GGCPSHDHGHSHHGHGHSHGHNHGHSHSDHGHNHGHTHNHGHSHGSA) is disordered. 2 stretches are compositionally biased toward basic residues: residues 555 to 571 (GHSH…NHGH) and 579 to 589 (NHGHTHNHGHS). The helical transmembrane segment at 605–625 (FSHVLADTLGSVGVIVSTILI) threads the bilayer. Zn(2+)-binding residues include histidine 607 and aspartate 611. The Lumenal portion of the chain corresponds to 626-629 (RQFG). Residues 630 to 650 (WLIADPLCSLFIAVLIFGSVL) form a helical membrane-spanning segment. The Cytoplasmic segment spans residues 651 to 777 (PLLKDACQVI…KYYKDGTYIM (127 aa)).

The protein belongs to the cation diffusion facilitator (CDF) transporter (TC 2.A.4) family. SLC30A subfamily. In terms of assembly, heterodimer with SLC30A6/ZNT6; form a functional zinc ion transmembrane transporter.

It localises to the golgi apparatus. The protein resides in the golgi stack membrane. The protein localises to the cytoplasmic vesicle. Its subcellular location is the COPII-coated vesicle membrane. It is found in the secretory vesicle membrane. It localises to the trans-Golgi network membrane. It catalyses the reaction Zn(2+)(in) + 2 H(+)(out) = Zn(2+)(out) + 2 H(+)(in). Functionally, together with SLC30A6 forms a functional proton-coupled zinc ion antiporter mediating zinc entry into the lumen of organelles along the secretory pathway. By contributing to zinc ion homeostasis within the early secretory pathway, regulates the activation and folding of enzymes like alkaline phosphatases and enzymes involved in phosphatidylinositol glycan anchor biosynthesis. This is Proton-coupled zinc antiporter SLC30A5 (slc30a5) from Xenopus tropicalis (Western clawed frog).